We begin with the raw amino-acid sequence, 570 residues long: MKMSNMLVGTLREVPAEAEIESHKLMLRAGLMRKMAAGIYNYMPLGLKVIENVKNIVREEMNNAGAQEFLASALIPAELWQESGRWDAYGAEMFRLKDRHNRDFCLGPTHEEVFTDIVRNEIKSYKQLPLNLYQIQTKYRDERRPRFGVMRSREFIMKDGYSFDKDQEGLDLAYEKMRKAYVNIFNRCGLDAKAVAADSGAIGGSGSAEFMVKSEVGEDDVVFCTACDYAANIEKAPSTPEHAEKEELMEVEKVETPAVKSIEDLAKFFECSPKKIAKTLIFQADDKVVAVVLRGDREANEVKIANAIGEVIELEMASEEAVKEATGAAVGFAGPMGIKVDILLVDQEVANMYNFIIGANETDMHLKNVNYGRDFEGIVGDFRNVTIGEKCPECGKEITISRGTEVGHIFKLGTKYSESMGATFIDEDGKAKPFIMGCYGIGVTRTVASIIEQHNDENGIIWPLEVAPYHVSVIPANVKNEEQATKAEEIYNELRKMGVEALLDDRKERAGVKFKDSELMGIPMRITVGKMIGEGQVEFKLRNGGEVETLSIEEVYNRVRKEFERENLSL.

Belongs to the class-II aminoacyl-tRNA synthetase family. ProS type 1 subfamily. Homodimer.

It localises to the cytoplasm. It carries out the reaction tRNA(Pro) + L-proline + ATP = L-prolyl-tRNA(Pro) + AMP + diphosphate. In terms of biological role, catalyzes the attachment of proline to tRNA(Pro) in a two-step reaction: proline is first activated by ATP to form Pro-AMP and then transferred to the acceptor end of tRNA(Pro). As ProRS can inadvertently accommodate and process non-cognate amino acids such as alanine and cysteine, to avoid such errors it has two additional distinct editing activities against alanine. One activity is designated as 'pretransfer' editing and involves the tRNA(Pro)-independent hydrolysis of activated Ala-AMP. The other activity is designated 'posttransfer' editing and involves deacylation of mischarged Ala-tRNA(Pro). The misacylated Cys-tRNA(Pro) is not edited by ProRS. This chain is Proline--tRNA ligase, found in Clostridium perfringens (strain SM101 / Type A).